The chain runs to 842 residues: MVKKFTSKIKAAVFAAVVAATAIFGPAISSQAVTSVPYKWDNVVIGGGGGFMPGIVFNETEKDLIYARADIGGAYRWDPSTETWIPLLDHFQMDEYSYYGVESIATDPVDPNRVYIAAGMYTNDWLPNMGAILRSTDRGETWEKTILPFKMGGNMPGRSMGERLAIDPNDNRILYLGTRCGNGLWRSTDYGVTWSKVESFPNPGTYIYDPNFDYTKDIIGVVWVVFDKSSSTPGNPTKTIYVGVADKNESIYRSTDGGVTWKAVPGQPKGLLPHHGVLASNGMLYITYGDTCGPYDGNGKGQVWKFNTRTGEWIDITPIPYSSSDNRFCFAGLAVDRQNPDIIMVTSMNAWWPDEYIFRSTDGGATWKNIWEWGMYPERILHYEIDISAAPWLDWGTEKQLPEINPKLGWMIGDIEIDPFNSDRMMYVTGATIYGCDNLTDWDRGGKVKIEVKATGIEECAVLDLVSPPEGAPLVSAVGDLVGFVHDDLKVGPKKMHVPSYSSGTGIDYAELVPNFMALVAKADLYDVKKISFSYDGGRNWFQPPNEAPNSVGGGSVAVAADAKSVIWTPENASPAVTTDNGNSWKVCTNLGMGAVVASDRVNGKKFYAFYNGKFYISTDGGLTFTDTKAPQLPKSVNKIKAVPGKEGHVWLAAREGGLWRSTDGGYTFEKLSNVDTAHVVGFGKAAPGQDYMAIYITGKIDNVLGFFRSDDAGKTWVRINDDEHGYGAVDTAITGDPRVYGRVYIATNGRGIVYGEPASDEPVPTPPQVDKGLVGDLNGDNRINSTDLTLMKRYILKSIEDLPVEDDLWAADINGDGKINSTDYTYLKKYLLQAIPELPKK.

The N-terminal stretch at 1 to 32 (MVKKFTSKIKAAVFAAVVAATAIFGPAISSQA) is a signal peptide. The active-site Nucleophile is Asp-70. 4 BNR repeats span residues 134–144 (RSTDRGETWEK), 185–196 (WRSTDYGVTWSK), 252–262 (YRSTDGGVTWK), and 358–368 (FRSTDGGATWK). Asp-480 (proton donor) is an active-site residue. BNR repeat units lie at residues 533–541 (FSYDGGRNW), 577–586 (VTTDNGNSWK), 616–626 (YISTDGGLTFT), 660–671 (WRSTDGGYTFEK), and 708–718 (FRSDDAGKTWV). The 71-residue stretch at 771–841 (DKGLVGDLNG…LLQAIPELPK (71 aa)) folds into the Dockerin domain.

Belongs to the glycosyl hydrolase 74 family.

Hydrolyzes the glucosidic bonds of unbranched Glc residues in tamarind seed xyloglucan, producing XXXG, XLXG, XXLG and XLLG. Has low activity on carboxymethylcellulose, lichenan,hydroxyethylcellulose and glucuronoxylan, and no activity on xylan, polygalaturonic acid, wheat arabinoxylan, rhamnogalacturan, curdlan, laminarin, galactomannan, galactan, arabinan and pachyman or amorphous cellulose. In Acetivibrio thermocellus (strain ATCC 27405 / DSM 1237 / JCM 9322 / NBRC 103400 / NCIMB 10682 / NRRL B-4536 / VPI 7372) (Clostridium thermocellum), this protein is Xyloglucanase Xgh74A.